An 821-amino-acid chain; its full sequence is BDNF/NT-3 growth factors receptor (821 aa).

An N-terminal signal peptide occupies residues 1–31 (MSPWLKWHGPAMARLWGLCLLVLGFWRASLA). Disulfide bonds link Cys32-Cys38 and Cys36-Cys45. Positions 32-61 (CPTSCKCSSARIWCTEPSPGIVAFPRLEPN) constitute an LRRNT domain. Residues 32–429 (CPTSCKCSSA…DVADQSNREH (398 aa)) are Extracellular-facing. Asn67, Asn95, and Asn121 each carry an N-linked (GlcNAc...) asparagine glycan. 2 LRR repeats span residues 92–113 (GLRN…AFLK) and 116–137 (NLRH…HFRH). An LRRCT domain is found at 148–196 (NPFTCSCDIMWLKTLQETKSSPDTQDLYCLNESSKNMPLANLQIPNCGL). Disulfide bonds link Cys152/Cys176 and Cys154/Cys194. N-linked (GlcNAc...) asparagine glycans are attached at residues Asn178, Asn205, Asn241, Asn254, Asn280, Asn325, Asn338, Asn350, and Asn411. 2 consecutive Ig-like C2-type domains span residues 197-282 (PSAR…VNLT) and 301-365 (WCIP…MAKN). An intrachain disulfide couples Cys218 to Cys266. A disulfide bond links Cys302 and Cys345. A helical transmembrane segment spans residues 430–453 (LSVYAVVVIASVVGFCLLVMLLLL). Residues 454 to 465 (KLARHSKFGMKG) are interaction with MAPK8IP3/JIP3. The Cytoplasmic portion of the chain corresponds to 454–821 (KLARHSKFGM…ASPVYLDILG (368 aa)). The interval 474–497 (DDSASPLHHISNGSNTPSSSEGGP) is disordered. Over residues 484–494 (SNGSNTPSSSE) the composition is skewed to polar residues. The residue at position 515 (Tyr515) is a Phosphotyrosine. The 270-residue stretch at 537 to 806 (IVLKRELGEG…KNIKSIHTLL (270 aa)) folds into the Protein kinase domain. ATP-binding positions include 543–551 (LGEGAFGKV) and Lys571. Asp675 functions as the Proton acceptor in the catalytic mechanism. Phosphotyrosine; by autocatalysis is present on residues Tyr701, Tyr705, Tyr706, and Tyr816.

The protein belongs to the protein kinase superfamily. Tyr protein kinase family. Insulin receptor subfamily. Exists in a dynamic equilibrium between monomeric (low affinity) and dimeric (high affinity) structures. Interacts (phosphorylated upon activation by BDNF) with SHC1; mediates SHC1 phosphorylation and activation. Interacts (phosphorylated upon activation by BDNF) with PLCG1 and/or PLCG2; mediates PLCG1 phosphorylation and activation. Interacts with SH2B1 and SH2B2. Interacts with NGFR; may regulate the ligand specificity of the receptor. Interacts with SORCS2; this interaction is important for normal targeting to post-synaptic densities in response to high-frequency stimulation. Interacts (phosphorylated upon ligand-binding) with SH2D1A; regulates NTRK2. Interacts with SQSTM1 and KIDINS220. Interacts (phosphorylated upon ligand-binding) with FRS2; activates the MAPK signaling pathway. Interacts with APPL1. Interacts with MAPK8IP3/JIP3 and KLC1; interaction with KLC1 is mediated by MAPK8IP3/JIP3. Interacts with SORL1; this interaction facilitates NTRK2 trafficking between synaptic plasma membranes, postsynaptic densities and cell soma, hence positively regulates BDNF signaling. Interacts with SLITRK2. Post-translationally, phosphorylated. Undergoes ligand-mediated autophosphorylation that is required for interaction with SHC1 and PLCG1 and other downstream effectors. Some isoforms are not phosphorylated. In terms of processing, ubiquitinated. Undergoes polyubiquitination upon activation; regulated by NGFR. Ubiquitination regulates the internalization of the receptor. Expressed in the brain, in neurons (at protein level). Detected in hippocampus (at protein level). Widely expressed in the central and peripheral nervous system. The different forms are differentially expressed in various cell types. Isoform GP95-TRKB is specifically expressed in glial cells.

The protein resides in the cell membrane. The protein localises to the endosome membrane. It is found in the early endosome membrane. It localises to the cell projection. Its subcellular location is the axon. The protein resides in the dendrite. The protein localises to the cytoplasm. It is found in the perinuclear region. It localises to the postsynaptic density. It catalyses the reaction L-tyrosyl-[protein] + ATP = O-phospho-L-tyrosyl-[protein] + ADP + H(+). Its activity is regulated as follows. The formation of active receptors dimers able to fully transduce the ligand-mediated signal, may be negatively regulated by the formation of inactive heterodimers with the non-catalytic isoforms. The neuronal activity and the influx of calcium positively regulate the kinase activity and the internalization of the receptor which are both important for active signaling. Regulated by NGFR that may control the internalization of the receptor. NGFR may also stimulate the activation by BDNF compared to NTF3 and NTF4. SH2D1A inhibits the autophosphorylation of the receptor, and alters the recruitment and activation of downstream effectors and signaling cascades. In terms of biological role, receptor tyrosine kinase involved in the development and the maturation of the central and the peripheral nervous systems through regulation of neuron survival, proliferation, migration, differentiation, and synapse formation and plasticity. Receptor for BDNF/brain-derived neurotrophic factor and NTF4/neurotrophin-4. Alternatively can also bind NTF3/neurotrophin-3 which is less efficient in activating the receptor but regulates neuron survival through NTRK2. Upon ligand-binding, undergoes homodimerization, autophosphorylation and activation. Recruits, phosphorylates and/or activates several downstream effectors including SHC1, FRS2, SH2B1, SH2B2 and PLCG1 that regulate distinct overlapping signaling cascades. Through SHC1, FRS2, SH2B1, SH2B2 activates the GRB2-Ras-MAPK cascade that regulates for instance neuronal differentiation including neurite outgrowth. Through the same effectors controls the Ras-PI3 kinase-AKT1 signaling cascade that mainly regulates growth and survival. Through PLCG1 and the downstream protein kinase C-regulated pathways controls synaptic plasticity. Thereby, plays a role in learning and memory by regulating both short term synaptic function and long-term potentiation. PLCG1 also leads to NF-Kappa-B activation and the transcription of genes involved in cell survival. Hence, it is able to suppress anoikis, the apoptosis resulting from loss of cell-matrix interactions. Isoform GP95-TRKB may also play a role in neutrophin-dependent calcium signaling in glial cells and mediate communication between neurons and glia. The protein is BDNF/NT-3 growth factors receptor of Mus musculus (Mouse).